The sequence spans 445 residues: UPF0210 protein SP_0239 (445 aa).

This sequence belongs to the UPF0210 family. As to quaternary structure, homodimer.

In Streptococcus pneumoniae serotype 4 (strain ATCC BAA-334 / TIGR4), this protein is UPF0210 protein SP_0239.